Reading from the N-terminus, the 354-residue chain is S-adenosylmethionine:tRNA ribosyltransferase-isomerase (354 aa).

This sequence belongs to the QueA family. As to quaternary structure, monomer.

It localises to the cytoplasm. The enzyme catalyses 7-aminomethyl-7-carbaguanosine(34) in tRNA + S-adenosyl-L-methionine = epoxyqueuosine(34) in tRNA + adenine + L-methionine + 2 H(+). Its pathway is tRNA modification; tRNA-queuosine biosynthesis. Transfers and isomerizes the ribose moiety from AdoMet to the 7-aminomethyl group of 7-deazaguanine (preQ1-tRNA) to give epoxyqueuosine (oQ-tRNA). The polypeptide is S-adenosylmethionine:tRNA ribosyltransferase-isomerase (Methylobacterium radiotolerans (strain ATCC 27329 / DSM 1819 / JCM 2831 / NBRC 15690 / NCIMB 10815 / 0-1)).